The sequence spans 405 residues: MAGRGCSCSPGHLNEDNARFLLLAGLILLYLLGGAAVFSALELAQELQAKQRWEERLANFSRGHNLSREELRGFLRHYEEATKAGIRMDSVRPRWDFTGAFYFVGTVVTTIGFGMTTPATTGGKVFLIFYGLIGCASTILFFNLFLERLITVIAYVMRTCHHQQLRRRGTVARDNRKAPRKGEADSLAGWKPSVYYVMLILCLASVAISCGASALYTTMEGWSYFDSVYFCFVASSTIGFGDLVSSQNAQYENEGLYRFVNFFFILMGVCCIYSMFNVISILIKQTVNWILRKLDSGCFPQCQRGLLRSRRNVVMPGNIRNRCNISIETDGVMESDTDGRRLSGEMISMKDTNKVSLAILQKQLSEMANGGPHQTSTSSRDDEFSGGVGAFAVMNNRLAETSGDR.

At Met-1–Arg-19 the chain is on the cytoplasmic side. The chain crosses the membrane as a helical span at residues Phe-20–Ala-40. Residues Asn-59 and Asn-65 are each glycosylated (N-linked (GlcNAc...) asparagine). Positions Trp-95 to Met-115 form an intramembrane region, pore-forming. Thr-110, Ile-111, and Gly-112 together coordinate K(+). The segment at Thr-110–Met-115 is selectivity filter 1. Residues Val-125–Phe-145 traverse the membrane as a helical segment. Topologically, residues Leu-146–Ser-193 are cytoplasmic. Residues Val-194–Ala-214 form a helical membrane-spanning segment. The pore-forming intramembrane region spans Tyr-224–Val-244. K(+) is bound by residues Thr-237, Ile-238, Gly-239, and Phe-240. The interval Thr-237–Asp-242 is selectivity filter 2. A helical transmembrane segment spans residues Phe-263–Ile-283. The Cytoplasmic portion of the chain corresponds to Lys-284–Arg-405.

Belongs to the two pore domain potassium channel (TC 1.A.1.8) family. In terms of assembly, homodimer. Heterodimer with KCNK12. As to expression, ubiquitous. In brain expression is rather low and restricted to the olfactory bulb and tubercle, to the ventromedial hypothalamic nucleus, lateral septal nucleus dorsal, lateral mammillary nucleus, lateral parabrachial nuclei, reticular nucleus and reunions nuclei.

Its subcellular location is the cell membrane. It carries out the reaction K(+)(in) = K(+)(out). Its activity is regulated as follows. The channel currents are activated by arachidonic acid, inhibited by volatile anesthetic halothane, partially inhibited by Ba(2+) ions and only weakly inhibited by extracellular acidification to pH 6. K(+) channel that conducts outward rectifying tonic currents potentiated by purinergic signals. Homo- and heterodimerizes to form functional channels with distinct regulatory and gating properties. Contributes most of K(+) currents at the plasma membrane of resting microglia. Maintains a depolarized membrane potential required for proper ramified microglia morphology and phagocytosis, selectively mediating microglial pruning of presynaptic compartments at hippocampal excitatory synapses. Upon local release of ATP caused by neuronal injury or infection, it is potentiated by P2RY12 and P2RX7 receptor signaling and contributes to ATP-triggered K(+) efflux underlying microglial NLRP3 inflammasome assembly and IL1B release. The protein is Potassium channel subfamily K member 13 of Rattus norvegicus (Rat).